We begin with the raw amino-acid sequence, 257 residues long: Adenosylcobinamide-GDP ribazoletransferase (257 aa).

Helical transmembrane passes span 28–48 (FARSPWTFPVVGYLVGGLVAL), 50–70 (LFVPAPAPTVALAFVLAVYAV), 110–130 (VALALVVLGLATAALGLVEVA), and 199–219 (WPQVLPGLAALLVALATAALV).

This sequence belongs to the CobS family. Mg(2+) is required as a cofactor.

The protein resides in the cell membrane. The enzyme catalyses alpha-ribazole + adenosylcob(III)inamide-GDP = adenosylcob(III)alamin + GMP + H(+). The catalysed reaction is alpha-ribazole 5'-phosphate + adenosylcob(III)inamide-GDP = adenosylcob(III)alamin 5'-phosphate + GMP + H(+). Its pathway is cofactor biosynthesis; adenosylcobalamin biosynthesis; adenosylcobalamin from cob(II)yrinate a,c-diamide: step 7/7. Its function is as follows. Joins adenosylcobinamide-GDP and alpha-ribazole to generate adenosylcobalamin (Ado-cobalamin). Also synthesizes adenosylcobalamin 5'-phosphate from adenosylcobinamide-GDP and alpha-ribazole 5'-phosphate. The polypeptide is Adenosylcobinamide-GDP ribazoletransferase (Halorubrum lacusprofundi (strain ATCC 49239 / DSM 5036 / JCM 8891 / ACAM 34)).